Consider the following 267-residue polypeptide: 4-hydroxy-tetrahydrodipicolinate reductase (267 aa).

NAD(+)-binding positions include 8–13 (GAAGRM) and glutamate 34. Arginine 35 is a binding site for NADP(+). NAD(+) is bound by residues 98 to 100 (GST) and 122 to 125 (APNM). The active-site Proton donor/acceptor is the histidine 155. Histidine 156 serves as a coordination point for (S)-2,3,4,5-tetrahydrodipicolinate. The Proton donor role is filled by lysine 159. 165-166 (GT) contacts (S)-2,3,4,5-tetrahydrodipicolinate.

This sequence belongs to the DapB family.

The protein resides in the cytoplasm. The enzyme catalyses (S)-2,3,4,5-tetrahydrodipicolinate + NAD(+) + H2O = (2S,4S)-4-hydroxy-2,3,4,5-tetrahydrodipicolinate + NADH + H(+). The catalysed reaction is (S)-2,3,4,5-tetrahydrodipicolinate + NADP(+) + H2O = (2S,4S)-4-hydroxy-2,3,4,5-tetrahydrodipicolinate + NADPH + H(+). It functions in the pathway amino-acid biosynthesis; L-lysine biosynthesis via DAP pathway; (S)-tetrahydrodipicolinate from L-aspartate: step 4/4. In terms of biological role, catalyzes the conversion of 4-hydroxy-tetrahydrodipicolinate (HTPA) to tetrahydrodipicolinate. The chain is 4-hydroxy-tetrahydrodipicolinate reductase from Geotalea uraniireducens (strain Rf4) (Geobacter uraniireducens).